Consider the following 135-residue polypeptide: Large ribosomal subunit protein bL17 (135 aa).

Belongs to the bacterial ribosomal protein bL17 family. As to quaternary structure, part of the 50S ribosomal subunit. Contacts protein L32.

This chain is Large ribosomal subunit protein bL17, found in Listeria monocytogenes serotype 4b (strain CLIP80459).